Reading from the N-terminus, the 466-residue chain is Cysteine--tRNA ligase (466 aa).

Cysteine 29 contacts Zn(2+). A 'HIGH' region motif is present at residues proline 31–asparagine 41. Zn(2+) contacts are provided by cysteine 209, histidine 234, and glutamate 238. A 'KMSKS' region motif is present at residues lysine 266–serine 270. Lysine 269 serves as a coordination point for ATP. The residue at position 270 (serine 270) is a Phosphoserine.

It belongs to the class-I aminoacyl-tRNA synthetase family. As to quaternary structure, monomer. Zn(2+) serves as cofactor.

It localises to the cytoplasm. It carries out the reaction tRNA(Cys) + L-cysteine + ATP = L-cysteinyl-tRNA(Cys) + AMP + diphosphate. This chain is Cysteine--tRNA ligase, found in Bacillus pumilus (strain SAFR-032).